Reading from the N-terminus, the 494-residue chain is Inosine-5'-monophosphate dehydrogenase (494 aa).

CBS domains are found at residues 93–154 (IIRN…NEKI) and 158–217 (MTTD…CKDM). Residues Asp-251 and 301–303 (GIG) each bind NAD(+). K(+)-binding residues include Gly-303 and Gly-305. Ser-306 contacts IMP. Cys-308 serves as a coordination point for K(+). Residue Cys-308 is the Thioimidate intermediate of the active site. IMP contacts are provided by residues 341 to 343 (DGG), 364 to 365 (GS), and 388 to 392 (YRGMG). Arg-406 acts as the Proton acceptor in catalysis. Glu-421 provides a ligand contact to IMP. K(+)-binding residues include Glu-475, Ser-476, and His-477.

The protein belongs to the IMPDH/GMPR family. Homotetramer. The cofactor is K(+).

The catalysed reaction is IMP + NAD(+) + H2O = XMP + NADH + H(+). It functions in the pathway purine metabolism; XMP biosynthesis via de novo pathway; XMP from IMP: step 1/1. Its activity is regulated as follows. Mycophenolic acid (MPA) is a non-competitive inhibitor that prevents formation of the closed enzyme conformation by binding to the same site as the amobile flap. In contrast, mizoribine monophosphate (MZP) is a competitive inhibitor that induces the closed conformation. MPA is a potent inhibitor of mammalian IMPDHs but a poor inhibitor of the bacterial enzymes. MZP is a more potent inhibitor of bacterial IMPDH. Catalyzes the conversion of inosine 5'-phosphate (IMP) to xanthosine 5'-phosphate (XMP), the first committed and rate-limiting step in the de novo synthesis of guanine nucleotides, and therefore plays an important role in the regulation of cell growth. This chain is Inosine-5'-monophosphate dehydrogenase, found in Chlorobaculum parvum (strain DSM 263 / NCIMB 8327) (Chlorobium vibrioforme subsp. thiosulfatophilum).